A 236-amino-acid chain; its full sequence is MAEPSAATQSPSISSSSSGAEPSAPGGGGSPGACPALGTKSCSSSCAVHDLIFWRDVKKTGFVFGTTLIMLLSLAAFSVISVVSYLILALLSVTISFRIYKSVIQAVQKSEEGHPFKAYLDVDITLSSEAFHNYMNAAMVHINRALKLIIRLFLVEDLVDSLKLAVFMWLMTYVGAVFNGITLLILAELLIFSVPIVYEKYKTQIDHYVGIARDQTKSIVEKIQAKLPGIAKKKAE.

Over residues 1–24 (MAEPSAATQSPSISSSSSGAEPSA) the composition is skewed to low complexity. A disordered region spans residues 1–31 (MAEPSAATQSPSISSSSSGAEPSAPGGGGSP). Ala2 is subject to N-acetylalanine. Residues 2–67 (AEPSAATQSP…KKTGFVFGTT (66 aa)) lie on the Cytoplasmic side of the membrane. Ser30 bears the Phosphoserine mark. Positions 48–236 (VHDLIFWRDV…LPGIAKKKAE (189 aa)) constitute a Reticulon domain. The segment at residues 68–91 (LIMLLSLAAFSVISVVSYLILALL) is an intramembrane region (helical). Topologically, residues 92-151 (SVTISFRIYKSVIQAVQKSEEGHPFKAYLDVDITLSSEAFHNYMNAAMVHINRALKLIIR) are cytoplasmic. Residues 152–172 (LFLVEDLVDSLKLAVFMWLMT) constitute an intramembrane region (helical). At 173 to 176 (YVGA) the chain is on the cytoplasmic side. An intramembrane region (helical) is located at residues 177-197 (VFNGITLLILAELLIFSVPIV). The segment at 191–236 (IFSVPIVYEKYKTQIDHYVGIARDQTKSIVEKIQAKLPGIAKKKAE) is interaction with FADD. The Cytoplasmic portion of the chain corresponds to 198–236 (YEKYKTQIDHYVGIARDQTKSIVEKIQAKLPGIAKKKAE). Residues 204-206 (QID) form an interaction with BACE1 region.

Homodimer. Interacts with RTN4. Interacts with BACE1, BACE2, BCL2 and FADD. Interacts with ATL1 and ATL2. Interacts with TMEM33. Interacts with ZFYVE27 and with KIF5A in a ZFYVE27-dependent manner. Interacts with RIGI. Interacts with TRIM25.

It localises to the endoplasmic reticulum membrane. Its subcellular location is the golgi apparatus membrane. Functionally, may be involved in membrane trafficking in the early secretory pathway. Inhibits BACE1 activity and amyloid precursor protein processing. May induce caspase-8 cascade and apoptosis. May favor BCL2 translocation to the mitochondria upon endoplasmic reticulum stress. Induces the formation of endoplasmic reticulum tubules. Acts also as an inflammation-resolving regulator by interacting with both TRIM25 and RIGI, subsequently impairing RIGI 'Lys-63'-linked polyubiquitination leading to IRF3 and NF-kappa-B inhibition. The protein is Reticulon-3 (RTN3) of Pongo abelii (Sumatran orangutan).